Here is a 384-residue protein sequence, read N- to C-terminus: S-adenosylmethionine synthase (384 aa).

H15 contributes to the ATP binding site. D17 serves as a coordination point for Mg(2+). E43 is a binding site for K(+). The L-methionine site is built by E56 and Q99. Residues 99–109 are flexible loop; the sequence is QSPDINQGVDR. ATP is bound by residues 164 to 166, 230 to 231, D239, 245 to 246, A262, and K266; these read DAK, RF, and RK. Residue D239 coordinates L-methionine. K270 is a binding site for L-methionine.

It belongs to the AdoMet synthase family. In terms of assembly, homotetramer; dimer of dimers. Mg(2+) is required as a cofactor. Requires K(+) as cofactor.

It localises to the cytoplasm. The catalysed reaction is L-methionine + ATP + H2O = S-adenosyl-L-methionine + phosphate + diphosphate. The protein operates within amino-acid biosynthesis; S-adenosyl-L-methionine biosynthesis; S-adenosyl-L-methionine from L-methionine: step 1/1. Its function is as follows. Catalyzes the formation of S-adenosylmethionine (AdoMet) from methionine and ATP. The overall synthetic reaction is composed of two sequential steps, AdoMet formation and the subsequent tripolyphosphate hydrolysis which occurs prior to release of AdoMet from the enzyme. This Cronobacter sakazakii (strain ATCC BAA-894) (Enterobacter sakazakii) protein is S-adenosylmethionine synthase.